The following is a 115-amino-acid chain: NADH-ubiquinone oxidoreductase chain 3 (115 aa).

Transmembrane regions (helical) follow at residues 4-24 (LVAL…AFWL), 55-75 (FFLV…LLPL), and 87-107 (MMLT…YEWM).

This sequence belongs to the complex I subunit 3 family. As to quaternary structure, core subunit of respiratory chain NADH dehydrogenase (Complex I) which is composed of 45 different subunits. Interacts with TMEM186. Interacts with TMEM242.

The protein localises to the mitochondrion inner membrane. It catalyses the reaction a ubiquinone + NADH + 5 H(+)(in) = a ubiquinol + NAD(+) + 4 H(+)(out). In terms of biological role, core subunit of the mitochondrial membrane respiratory chain NADH dehydrogenase (Complex I) which catalyzes electron transfer from NADH through the respiratory chain, using ubiquinone as an electron acceptor. Essential for the catalytic activity of complex I. In Habromys lophurus (Crested-tailed deer mouse), this protein is NADH-ubiquinone oxidoreductase chain 3.